The chain runs to 589 residues: Aspartate--tRNA ligase (589 aa).

Position 174 (Glu-174) interacts with L-aspartate. The segment at 198–201 (QLFK) is aspartate. Arg-220 serves as a coordination point for L-aspartate. ATP contacts are provided by residues 220–222 (RDE) and Gln-229. His-448 contacts L-aspartate. Glu-483 contacts ATP. Arg-490 is a binding site for L-aspartate. 535 to 538 (GIDR) contributes to the ATP binding site.

This sequence belongs to the class-II aminoacyl-tRNA synthetase family. Type 1 subfamily. In terms of assembly, homodimer.

It is found in the cytoplasm. It carries out the reaction tRNA(Asp) + L-aspartate + ATP = L-aspartyl-tRNA(Asp) + AMP + diphosphate. In terms of biological role, catalyzes the attachment of L-aspartate to tRNA(Asp) in a two-step reaction: L-aspartate is first activated by ATP to form Asp-AMP and then transferred to the acceptor end of tRNA(Asp). The sequence is that of Aspartate--tRNA ligase from Xylella fastidiosa (strain M23).